Reading from the N-terminus, the 193-residue chain is Cytidylate kinase (193 aa).

12 to 20 (GLAGSGTTT) is an ATP binding site.

The protein belongs to the cytidylate kinase family. Type 2 subfamily.

Its subcellular location is the cytoplasm. It catalyses the reaction CMP + ATP = CDP + ADP. The catalysed reaction is dCMP + ATP = dCDP + ADP. The sequence is that of Cytidylate kinase from Thermococcus sibiricus (strain DSM 12597 / MM 739).